An 86-amino-acid polypeptide reads, in one-letter code: Large ribosomal subunit protein bL31B (86 aa).

It belongs to the bacterial ribosomal protein bL31 family. Type B subfamily. As to quaternary structure, part of the 50S ribosomal subunit.

The protein is Large ribosomal subunit protein bL31B of Cupriavidus necator (strain ATCC 17699 / DSM 428 / KCTC 22496 / NCIMB 10442 / H16 / Stanier 337) (Ralstonia eutropha).